The sequence spans 422 residues: Glycine amidinotransferase, mitochondrial (422 aa).

Residues 1–37 (MLRVRCLRGGSRGAEAVHYIGSMLRKSFVGWVQRSFQ) constitute a mitochondrion transit peptide. Catalysis depends on residues D253 and H302. C406 (amidino-cysteine intermediate) is an active-site residue.

Belongs to the amidinotransferase family. As to quaternary structure, homodimer. As to expression, ubiquitously expressed in adult tissues, with highest levels in muscle and intermediate levels in eye, heart, liver, stomach and testis. In stage 28 embryos, expression is higher in the dorsal and ventral parts of the trunk than in the head. In middle gastrulae, expression is highest around the yolk plug, while in stage 15 and tailbud stage embryos, expression is largely restricted to the region around the presumptive notochord and gut.

The protein resides in the mitochondrion inner membrane. The enzyme catalyses L-arginine + glycine = guanidinoacetate + L-ornithine. It participates in amine and polyamine biosynthesis; creatine biosynthesis; creatine from L-arginine and glycine: step 1/2. Its function is as follows. Catalyzes the biosynthesis of guanidinoacetate, the immediate precursor of creatine. Creatine plays a vital role in energy metabolism in muscle tissues. May play a role in embryonic and central nervous system development. This Xenopus laevis (African clawed frog) protein is Glycine amidinotransferase, mitochondrial.